Here is a 546-residue protein sequence, read N- to C-terminus: ATP synthase subunit alpha (546 aa).

172-179 is a binding site for ATP; that stretch reads GDRKTGKT. Composition is skewed to polar residues over residues 511 to 520 and 536 to 546; these read FRTTEGNNLG and TELNVSRKTAK. The tract at residues 511–546 is disordered; the sequence is FRTTEGNNLGTEAPVDPLAADDVNKTELNVSRKTAK.

This sequence belongs to the ATPase alpha/beta chains family. In terms of assembly, F-type ATPases have 2 components, CF(1) - the catalytic core - and CF(0) - the membrane proton channel. CF(1) has five subunits: alpha(3), beta(3), gamma(1), delta(1), epsilon(1). CF(0) has three main subunits: a(1), b(2) and c(9-12). The alpha and beta chains form an alternating ring which encloses part of the gamma chain. CF(1) is attached to CF(0) by a central stalk formed by the gamma and epsilon chains, while a peripheral stalk is formed by the delta and b chains.

It localises to the cell membrane. It carries out the reaction ATP + H2O + 4 H(+)(in) = ADP + phosphate + 5 H(+)(out). Functionally, produces ATP from ADP in the presence of a proton gradient across the membrane. The alpha chain is a regulatory subunit. In Corynebacterium aurimucosum (strain ATCC 700975 / DSM 44827 / CIP 107346 / CN-1) (Corynebacterium nigricans), this protein is ATP synthase subunit alpha.